Here is a 511-residue protein sequence, read N- to C-terminus: RNA polymerase principal sigma factor HrdB (511 aa).

Residues 72 to 186 are disordered; it reads SAAEPKRTRK…AATEEPEGTE (115 aa). The span at 78–93 shows a compositional bias: basic residues; sequence RTRKSVAAKSPAKRTA. The span at 94-121 shows a compositional bias: low complexity; the sequence is TKAVAAKPVTSRKATAPAAPAAPATEPA. Basic residues predominate over residues 132–158; sequence AAAKKTTAKKATAKKTTAKKAAAKKTT. The interval 211–347 is binds RNA polymerase-binding protein RbpA; that stretch reads TADPVKDYLK…ITRAMADQAR (137 aa). Residues 278–348 are sigma-70 factor domain-2; sequence LLEANLRLVV…TRAMADQART (71 aa). The short motif at 302-305 is the Interaction with polymerase core subunit RpoC element; the sequence is DLIQ. Positions 357 to 433 are sigma-70 factor domain-3; it reads EVINKLARVQ…DSEAVVPADA (77 aa). A sigma-70 factor domain-4 region spans residues 446–499; sequence VLDTLSEREAGVVSMRFGLTDGQPKTLDEIGKVYGVTRERIRQIESKTMSKLRH. The H-T-H motif DNA-binding region spans 472-491; the sequence is LDEIGKVYGVTRERIRQIES.

It belongs to the sigma-70 factor family. In terms of assembly, homotrimer (Potential). interacts transiently with the RNA polymerase core complex. Interacts with RNA polymerase-binding protein RbpA via its sigma-2 region (residues 211-347) in a free form.

In terms of biological role, sigma factors are initiation factors that promote the attachment of RNA polymerase to specific initiation sites and are then released. This sigma factor is the primary sigma factor during exponential growth. Its activity is stimulated by RbpA. The chain is RNA polymerase principal sigma factor HrdB (hrdB) from Streptomyces coelicolor (strain ATCC BAA-471 / A3(2) / M145).